The chain runs to 148 residues: Large ribosomal subunit protein uL15B (148 aa).

2 stretches are compositionally biased toward basic residues: residues 1–13 and 21–31; these read MPTH…KLRG and RIGKHRKHPGG. The tract at residues 1 to 38 is disordered; it reads MPTHTSKTRKLRGHVSAGHGRIGKHRKHPGGRGKAGGL. Position 108 is a phosphotyrosine (Y108).

This sequence belongs to the universal ribosomal protein uL15 family. Component of the large ribosomal subunit (LSU). Mature yeast ribosomes consist of a small (40S) and a large (60S) subunit. The 40S small subunit contains 1 molecule of ribosomal RNA (18S rRNA) and at least 33 different proteins. The large 60S subunit contains 3 rRNA molecules (25S, 5.8S and 5S rRNA) and at least 46 different proteins.

The protein resides in the cytoplasm. It localises to the nucleus. It is found in the nucleolus. Its function is as follows. Component of the ribosome, a large ribonucleoprotein complex responsible for the synthesis of proteins in the cell. The small ribosomal subunit (SSU) binds messenger RNAs (mRNAs) and translates the encoded message by selecting cognate aminoacyl-transfer RNA (tRNA) molecules. The large subunit (LSU) contains the ribosomal catalytic site termed the peptidyl transferase center (PTC), which catalyzes the formation of peptide bonds, thereby polymerizing the amino acids delivered by tRNAs into a polypeptide chain. The nascent polypeptides leave the ribosome through a tunnel in the LSU and interact with protein factors that function in enzymatic processing, targeting, and the membrane insertion of nascent chains at the exit of the ribosomal tunnel. The polypeptide is Large ribosomal subunit protein uL15B (rpl2801) (Schizosaccharomyces pombe (strain 972 / ATCC 24843) (Fission yeast)).